We begin with the raw amino-acid sequence, 730 residues long: Transient receptor potential cation channel subfamily V member 5 (730 aa).

The Cytoplasmic portion of the chain corresponds to 1 to 327 (MGACPPKAKG…SFKWKKYGRP (327 aa)). ANK repeat units follow at residues 44–74 (IRDSPLLQAAKENDLRLLKILLLNQSCDFQQ), 78–107 (VGETALHVAALYDNLEAATLLMEAAPELAK), 116–145 (VGQTALHIAVMNQNLNLVRALLARGASVSA), 162–191 (YGEHPLSFAACVGSEEIVRLLIEHGADIRA), 195–228 (LGNTVLHILILQPNKTFACQMYNLLLSYDEHSDH), and 239–268 (QGLTPFKLAGVEGNTVMFQHLMQKRKHVQW). The helical transmembrane segment at 328 to 348 (YFCVLASLYILYMICFTTCCI) threads the bilayer. Residues 349-385 (YRPLKLRDDNRTDPRDITILQQKLLQEAYVTHQDNIR) lie on the Extracellular side of the membrane. Asn358 is a glycosylation site (N-linked (GlcNAc...) asparagine). The chain crosses the membrane as a helical span at residues 386–408 (LVGELVTVTGAVIILLLEIPDIF). The Cytoplasmic segment spans residues 409–419 (RVGASRYFGQT). The helical transmembrane segment at 420-442 (ILGGPFHVIIITYASLVLLTMVM) threads the bilayer. The Extracellular segment spans residues 443–448 (RLTNMN). A helical transmembrane segment spans residues 449–469 (GEVVPLSFALVLGWCSVMYFA). Over 470-492 (RGFQMLGPFTIMIQKMIFGDLMR) the chain is Cytoplasmic. The helical transmembrane segment at 493 to 513 (FCWLMAVVILGFASAFHITFQ) threads the bilayer. The pore-forming intramembrane region spans 524 to 544 (SDYPTALFSTFELFLTIIDGP). Residue Asp542 participates in Ca(2+) binding. A helical transmembrane segment spans residues 557–577 (ITYAAFAIIATLLMLNLFIAM). At 578–730 (MGDTHWRVAQ…EGDGEEVYHF (153 aa)) the chain is on the cytoplasmic side. Residues 598–602 (VATTV) form an interaction with S100A10 region. The segment at 650 to 653 (AFKC) is involved in Ca(2+)-dependent inactivation. A Phosphothreonine modification is found at Thr685. Residue Ser689 is modified to Phosphoserine. The interval 701-730 (GWEILRRNTLGHLNLGLDLGEGDGEEVYHF) is involved in Ca(2+)-dependent inactivation.

The protein belongs to the transient receptor (TC 1.A.4) family. TrpV subfamily. TRPV5 sub-subfamily. In terms of assembly, homotetramer. Probably forms heterotetramers with TRPV6. Interacts with TRPV6. Interacts with S100A10 and probably with the ANAX2-S100A10 heterotetramer. The interaction with S100A10 is required for the trafficking to the plasma membrane. Interacts with calmodulin. Interacts with BSPRY, which results in its inactivation. Post-translationally, glycosylated. In terms of tissue distribution, detected in kidney cortex, in distal convoluted tubules and cortical collecting ducts (at protein level). Detected in duodenum, jejunum, ileum, kidney and placenta.

The protein localises to the cell membrane. The protein resides in the apical cell membrane. It catalyses the reaction Ca(2+)(in) = Ca(2+)(out). With respect to regulation, activated by WNK3. Constitutively active calcium selective cation channel thought to be involved in Ca(2+) reabsorption in kidney and intestine. Required for normal Ca(2+) reabsorption in the kidney distal convoluted tubules. The channel is activated by low internal calcium level and the current exhibits an inward rectification. A Ca(2+)-dependent feedback regulation includes fast channel inactivation and slow current decay. Heteromeric assembly with TRPV6 seems to modify channel properties. TRPV5-TRPV6 heteromultimeric concatemers exhibit voltage-dependent gating. The sequence is that of Transient receptor potential cation channel subfamily V member 5 (Trpv5) from Oryctolagus cuniculus (Rabbit).